Here is a 72-residue protein sequence, read N- to C-terminus: Alpha-elapitoxin-Ast2b (72 aa).

5 disulfides stabilise this stretch: Cys-3/Cys-20, Cys-13/Cys-41, Cys-26/Cys-30, Cys-45/Cys-56, and Cys-57/Cys-62. Position 72 is an arginine amide (Arg-72).

Belongs to the three-finger toxin family. Long-chain subfamily. Type II alpha-neurotoxin sub-subfamily. Expressed by the venom gland.

Its subcellular location is the secreted. Functionally, binds with high affinity to muscular (alpha-1/CHRNA1) and neuronal (alpha-7/CHRNA7) nicotinic acetylcholine receptor (nAChR) and inhibits acetylcholine from binding to the receptor, thereby impairing neuromuscular and neuronal transmission. In Hydrophis stokesii (Stokes's sea snake), this protein is Alpha-elapitoxin-Ast2b.